The following is a 196-amino-acid chain: MSDTSSLDALIQALRRLPGVGVKSAQRMAFHLLQHDRAGAQVLSQALAQAATQVRHCERCHTFTEGAVCETCLDPARDATRLCVVETPADQAAMERTAAFKGLYFVLMGRLSPLDGVGPRDIGVHNLLERASDGVVQEVILATSFTAEGEATAHAIGEALKRRGVHVTRLARGVPVGSELEYVDLGTIAHALADRR.

Residues 57 to 72 form a C4-type zinc finger; that stretch reads CERCHTFTEGAVCETC. Residues 80–175 form the Toprim domain; the sequence is TRLCVVETPA…HVTRLARGVP (96 aa).

It belongs to the RecR family.

May play a role in DNA repair. It seems to be involved in an RecBC-independent recombinational process of DNA repair. It may act with RecF and RecO. This is Recombination protein RecR from Acidovorax sp. (strain JS42).